The sequence spans 302 residues: Methionyl-tRNA formyltransferase (302 aa).

(6S)-5,6,7,8-tetrahydrofolate is bound at residue 109–112 (SILP).

Belongs to the Fmt family.

It catalyses the reaction L-methionyl-tRNA(fMet) + (6R)-10-formyltetrahydrofolate = N-formyl-L-methionyl-tRNA(fMet) + (6S)-5,6,7,8-tetrahydrofolate + H(+). Attaches a formyl group to the free amino group of methionyl-tRNA(fMet). The formyl group appears to play a dual role in the initiator identity of N-formylmethionyl-tRNA by promoting its recognition by IF2 and preventing the misappropriation of this tRNA by the elongation apparatus. The protein is Methionyl-tRNA formyltransferase of Campylobacter hominis (strain ATCC BAA-381 / DSM 21671 / CCUG 45161 / LMG 19568 / NCTC 13146 / CH001A).